We begin with the raw amino-acid sequence, 1177 residues long: Putative ATP-dependent RNA helicase TDRD12 (1177 aa).

Residues 56-118 (TLEEGQVCVV…RVVVESFMQL (63 aa)) form the Tudor 1 domain. The Helicase ATP-binding domain maps to 447 to 635 (WPPIARGCDV…KEFMNDPYIV (189 aa)). 460–467 (SHCESNPL) is a binding site for ATP. Residues 574-577 (DEVE) carry the DEAH box motif. In terms of domain architecture, Tudor 2 spans 900–999 (IVDKHMDLYA…HTLPPQAVEF (100 aa)). Residues 1098 to 1177 (EESLSQTPPR…VFKRWLSSNR (80 aa)) are disordered. Over residues 1100–1115 (SLSQTPPRVTGTSPAQ) the composition is skewed to polar residues.

Component of a mRNP complex containing PIWIL2, TDRD1 and piRNAs. Component of the PET complex, at least composed of EXD1, PIWIL2, TDRD12 and piRNAs.

The catalysed reaction is ATP + H2O = ADP + phosphate + H(+). In terms of biological role, probable ATP-binding RNA helicase required during spermatogenesis to repress transposable elements and preventing their mobilization, which is essential for the germline integrity. Acts via the piRNA metabolic process, which mediates the repression of transposable elements during meiosis by forming complexes composed of piRNAs and Piwi proteins and governs the methylation and subsequent repression of transposons. Involved in the secondary piRNAs metabolic process. Acts via the PET complex, a multiprotein complex required during the secondary piRNAs metabolic process for the PIWIL2 slicing-triggered loading of PIWIL4 piRNAs. This chain is Putative ATP-dependent RNA helicase TDRD12 (TDRD12), found in Homo sapiens (Human).